We begin with the raw amino-acid sequence, 1218 residues long: NACHT, LRR and PYD domains-containing protein 1a allele 1 (1218 aa).

The segment at 1-61 is disordered; it reads MEESQSKQES…SLPGWSSTSN (61 aa). The segment covering 7–29 has biased composition (polar residues); the sequence is KQESNTRVAQHGSQQDVDPTFQT. Residues 175 to 484 form the NACHT domain; the sequence is QLVIIEGAAG…EFFAAMSYIL (310 aa). 181-188 serves as a coordination point for ATP; sequence GAAGIGKS. LRR repeat units lie at residues 343–364, 673–693, and 730–750; these read KERNTIIDFNLIGSIPVLLTLC, NLEELDLSGNPLSYSAVRSLC, and RLAELDLRLNDLGDNGVRQLC. A compositionally biased stretch (polar residues) spans 799 to 815; sequence TMPTENTDGEESLTSSK. The tract at residues 799–842 is disordered; sequence TMPTENTDGEESLTSSKQQQQQSGDKHMEPLGTDDDFWGPSGPV. The ZU5 stretch occupies residues 835–968; that stretch reads FWGPSGPVST…HFAVLENPSF (134 aa). Positions 835 to 1118 constitute an FIIND domain; sequence FWGPSGPVST…LRPALPRMAS (284 aa). Residues 969 to 1118 are UPA; the sequence is SPMGVLLRMI…LRPALPRMAS (150 aa). Residues 1122 to 1211 form the CARD domain; that stretch reads DAPALLHFVD…HLIMDLLEKS (90 aa).

It belongs to the NLRP family. Interacts (via LRR repeats) with BCL2 and BCL2L1 (via the loop between motifs BH4 and BH3). Interacts with NOD2; this interaction is enhanced in the presence of muramyl dipeptide (MDP) and increases IL1B release. Interacts with EIF2AK2/PKR; this interaction requires EIF2AK2 activity, is accompanied by EIF2AK2 autophosphorylation and promotes inflammasome assembly in response to danger-associated signals. Interacts with MEFV; this interaction targets Nlrp1a to degradation by autophagy, hence preventing excessive IL1B- and IL18-mediated inflammation. Interacts with DPP9; leading to inhibit activation of the inflammasome. DPP9 acts via formation of a ternary complex, composed of a DPP9 homodimer, one full-length NLRP1 protein, and one cleaved C-terminus of Nlrp1a (NACHT, LRR and PYD domains-containing protein 1a, C-terminus). Interacts with DPP8; leading to inhibit activation of the inflammasome, probably via formation of a ternary complex with DPP8. As to quaternary structure, interacts with the C-terminal part of Nlrp1a (NACHT, LRR and PYD domains-containing protein 1a, C-terminus) in absence of pathogens and other damage-associated signals. In terms of assembly, interacts with the N-terminal part of Nlrp1a (NACHT, LRR and PYD domains-containing protein 1a, N-terminus) in absence of pathogens and other damage-associated signals. Homomultimer; forms the Nlrp1a inflammasome polymeric complex, a filament composed of homopolymers of this form in response to pathogens and other damage-associated signals. The Nlrp1a inflammasome polymeric complex directly recruits pro-caspase-1 (proCASP1) independently of PYCARD/ASC. Interacts (via CARD domain) with CASP1 (via CARD domain); leading to CASP1 activation. Post-translationally, autocatalytically cleaved. Autocatalytic cleavage in FIIND region occurs constitutively, prior to activation signals, and is required for inflammasome activity (IL1B release), possibly by facilitating CASP1 binding. Both N- and C-terminal parts remain associated non-covalently. (Microbial infection) Cleavage by B.anthracis lethal toxin (LT) endopeptidase promotes ubiquitination and degradation of the N-terminal part, releasing the cleaved C-terminal part of the protein (NACHT, LRR and PYD domains-containing protein 1a, C-terminus), which polymerizes and forms the Nlrp1a inflammasome. In terms of processing, ubiquitinated in response to pathogen-associated signals, leading to its degradation by the proteasome and subsequent release of the cleaved C-terminal part of the protein (NACHT, LRR and PYD domains-containing protein 1a, C-terminus), which polymerizes and forms the Nlrp1a inflammasome.

The protein localises to the cytoplasm. It localises to the cytosol. The protein resides in the nucleus. It is found in the inflammasome. Its activity is regulated as follows. Activated by cleavage by B.anthracis lethal toxin (LT) endopeptidase. Cleavage by LT promotes ubiquitination and degradation of the N-terminal part, releasing the cleaved C-terminal part of the protein (NACHT, LRR and PYD domains-containing protein 1a, C-terminus), which polymerizes and forms the Nlrp1a inflammasome. Nlrp1a inflammasome is inhibited by DPP8 and DPP9, which sequester the C-terminal fragment of Nlrp1a (NACHT, LRR and PYD domains-containing protein 1a, C-terminus) in a ternary complex, thereby preventing Nlrp1a oligomerization and activation. Nlrp1a inflammasome is weakly activated by Val-boroPro (Talabostat, PT-100), an inhibitor of dipeptidyl peptidases DPP8 and DPP9. Val-boroPro relieves inhibition of DPP8 and/or DPP9 by promoting disruption of the ternary complex, releasing its C-terminal part from autoinhibition. Weakly activated by Toxoplasma gondii. Its function is as follows. Acts as the sensor component of the Nlrp1a inflammasome, which mediates inflammasome activation in response to various pathogen-associated signals, leading to subsequent pyroptosis. Inflammasomes are supramolecular complexes that assemble in the cytosol in response to pathogens and other damage-associated signals and play critical roles in innate immunity and inflammation. Acts as a recognition receptor (PRR): recognizes specific pathogens and other damage-associated signals, such as B.anthracis lethal toxin (LT) or Val-boroPro inhibitor, and mediates the formation of the inflammasome polymeric complex. In response to pathogen-associated signals, the N-terminal part of Nlrp1a is degraded by the proteasome, releasing the cleaved C-terminal part of the protein (NACHT, LRR and PYD domains-containing protein 1a, C-terminus), which polymerizes to initiate the formation of the inflammasome complex: the inflammasome directly recruits pro-caspase-1 (proCASP1) independently of PYCARD/ASC and promotes caspase-1 (CASP1) activation, which subsequently cleaves and activates inflammatory cytokines IL1B and IL18 and gasdermin-D (GSDMD), leading to pyroptosis. In the absence of GSDMD expression, the Nlrp1a inflammasome is able to recruit and activate CASP8, leading to activation of gasdermin-E (GSDME). In terms of biological role, constitutes the precursor of the Nlrp1a inflammasome, which mediates autoproteolytic processing within the FIIND domain to generate the N-terminal and C-terminal parts, which are associated non-covalently in absence of pathogens and other damage-associated signals. Regulatory part that prevents formation of the Nlrp1a inflammasome: in absence of pathogens and other damage-associated signals, interacts with the C-terminal part of Nlrp1a (NACHT, LRR and PYD domains-containing protein 1a, C-terminus), preventing activation of the Nlrp1a inflammasome. In response to pathogen-associated signals, this part is ubiquitinated by the N-end rule pathway and degraded by the proteasome, releasing the cleaved C-terminal part of the protein, which polymerizes and forms the Nlrp1a inflammasome. Functionally, constitutes the active part of the Nlrp1a inflammasome. In absence of pathogens and other damage-associated signals, interacts with the N-terminal part of Nlrp1a (NACHT, LRR and PYD domains-containing protein 1a, N-terminus), preventing activation of the Nlrp1a inflammasome. In response to pathogen-associated signals, the N-terminal part of Nlrp1a is degraded by the proteasome, releasing this form, which polymerizes to form the Nlrp1a inflammasome complex: the Nlrp1a inflammasome complex then directly recruits pro-caspase-1 (proCASP1) and promotes caspase-1 (CASP1) activation, leading to gasdermin-D (GSDMD) cleavage and subsequent pyroptosis. The polypeptide is NACHT, LRR and PYD domains-containing protein 1a allele 1 (Rattus norvegicus (Rat)).